The primary structure comprises 81 residues: Elicitor peptide 4 (81 aa).

The propeptide occupies methionine 1 to arginine 54. The segment at proline 57 to phenylalanine 81 is disordered.

The protein belongs to the brassicaceae elicitor peptide family.

Functionally, elicitor of plant defense. The chain is Elicitor peptide 4 (PEP4) from Arabidopsis thaliana (Mouse-ear cress).